The following is a 384-amino-acid chain: Cell division protein FtsZ (384 aa).

Residues 20–24 (GGGGN), 107–109 (GTG), E138, R142, and N186 each bind GTP.

The protein belongs to the FtsZ family. In terms of assembly, homodimer. Polymerizes to form a dynamic ring structure in a strictly GTP-dependent manner. Interacts directly with several other division proteins.

It is found in the cytoplasm. Essential cell division protein that forms a contractile ring structure (Z ring) at the future cell division site. The regulation of the ring assembly controls the timing and the location of cell division. One of the functions of the FtsZ ring is to recruit other cell division proteins to the septum to produce a new cell wall between the dividing cells. Binds GTP and shows GTPase activity. The protein is Cell division protein FtsZ of Buchnera aphidicola subsp. Schizaphis graminum (strain Sg).